A 37-amino-acid polypeptide reads, in one-letter code: MIEPLLCGIVLGLIPITLMGLFVAAWNQYRRGSALEG.

Residues L5 to A25 form a helical membrane-spanning segment.

Belongs to the PetG family. In terms of assembly, the 4 large subunits of the cytochrome b6-f complex are cytochrome b6, subunit IV (17 kDa polypeptide, PetD), cytochrome f and the Rieske protein, while the 4 small subunits are PetG, PetL, PetM and PetN. The complex functions as a dimer.

The protein resides in the cellular thylakoid membrane. In terms of biological role, component of the cytochrome b6-f complex, which mediates electron transfer between photosystem II (PSII) and photosystem I (PSI), cyclic electron flow around PSI, and state transitions. PetG is required for either the stability or assembly of the cytochrome b6-f complex. This is Cytochrome b6-f complex subunit 5 from Synechococcus sp. (strain CC9311).